We begin with the raw amino-acid sequence, 419 residues long: Synaptotagmin-1 (419 aa).

Residues 1-58 are Vesicular-facing; the sequence is MVSESHHEALAAPPVTTVATVLPSNATEPASPGEGKEDAFSKLKEKFMNELHKIPLPP. N-linked (GlcNAc...) asparagine glycosylation is present at asparagine 25. A helical membrane pass occupies residues 59–80; it reads WALIAIAIVAVLLVLTCCFCIC. 5 S-palmitoyl cysteine lipidation sites follow: cysteine 75, cysteine 76, cysteine 78, cysteine 80, and cysteine 83. The Cytoplasmic segment spans residues 81–419; that stretch reads KKCLFKKKNK…EVDAMLAVKK (339 aa). A disordered region spans residues 108 to 139; that stretch reads KDLGKTMKDQDDDAETGLTDGEEKEEPKEEEK. Residues 117 to 131 show a composition bias toward acidic residues; it reads QDDDAETGLTDGEEK. The residue at position 126 (threonine 126) is a Phosphothreonine. The interval 133 to 379 is phospholipid binding; it reads EPKEEEKLGK…AIGKVFVGYN (247 aa). One can recognise a C2 1 domain in the interval 139–258; it reads KLGKLQYSLD…DFGHVTEEWR (120 aa). Residues leucine 169, aspartate 170, and aspartate 176 each coordinate Ca(2+). Tyrosine 227 is subject to Phosphotyrosine. Ca(2+) is bound by residues aspartate 228, phenylalanine 229, aspartate 230, serine 233, lysine 234, and aspartate 236. Serine 262 carries the phosphoserine modification. The 134-residue stretch at 270-403 folds into the C2 2 domain; that stretch reads KLGDICFSLR…NPRRPIAQWH (134 aa). Aspartate 301 and aspartate 307 together coordinate Ca(2+). Phosphoserine occurs at positions 340 and 342. Ca(2+)-binding residues include aspartate 361, aspartate 363, and aspartate 369.

Belongs to the synaptotagmin family. In terms of assembly, homotetramer. Heterodimer; heterodimerizes with SYT2 in presence of calcium. Interacts with SCAMP5. Interacts with STON2. Forms a complex with SV2B, syntaxin 1 and SNAP25. Interacts with SV2A, SV2B and SV2C. Interacts with RIMS1. Interacts with PRRT2. Interacts with DNAJC5 in a phosphorylation-dependent manner. Interacts (via N-terminus) with RAB3A. Interacts with SYT12. Interacts with calmodulin. Interacts with DNM1 (via C-terminal proline-rich domain (PRD)); this interaction facilitates vesicle fission during clathrin-mediated endocytosis (CME). Requires Ca(2+) as cofactor. In terms of processing, glycosylated.

It localises to the cytoplasmic vesicle. The protein localises to the secretory vesicle membrane. It is found in the secretory vesicle. The protein resides in the synaptic vesicle membrane. Its subcellular location is the chromaffin granule membrane. It localises to the cytoplasm. Functionally, calcium sensor that participates in triggering neurotransmitter release at the synapse. May have a regulatory role in the membrane interactions during trafficking of synaptic vesicles at the active zone of the synapse. It binds acidic phospholipids with a specificity that requires the presence of both an acidic head group and a diacyl backbone. A Ca(2+)-dependent interaction between synaptotagmin and putative receptors for activated protein kinase C has also been reported. It can bind to at least three additional proteins in a Ca(2+)-independent manner; these are neurexins, syntaxin and AP2. Plays a role in dendrite formation by melanocytes. The polypeptide is Synaptotagmin-1 (Pongo abelii (Sumatran orangutan)).